The chain runs to 307 residues: MTSVEQRTATAVFSRTGSRMAERRLAFMLVAPAAMLMVAVTAYPIGYALWLSLQRNNLATPNDTAFIGLGNYHTILIDRYWWTALAVTLAITAVSVTIEFVLGLALALVMHRTLIGKGLVRTAVLIPYGIVTVVASYSWYYAWTPGTGYLANLLPYDSAPLTQQIPSLGIVVIAEVWKTTPFMSLLLLAGLALVPEDLLRAAQVDGASAWRRLTKVILPMIKPAIVVALLFRTLDAFRIFDNIYVLTGGSNNTGSVSILGYDNLFKGFNVGLGSAISVLIFGCVAVIAFIFIKLFGAAAPGGEPSGR.

A run of 6 helical transmembrane segments spans residues 25–45 (LAFM…AYPI), 89–109 (LAIT…LALV), 123–143 (AVLI…YYAW), 168–188 (LGIV…LLLL), 217–237 (ILPM…LDAF), and 272–292 (LGSA…FIFI). Positions 85 to 291 (LAVTLAITAV…GCVAVIAFIF (207 aa)) constitute an ABC transmembrane type-1 domain.

The protein belongs to the binding-protein-dependent transport system permease family. The complex is composed of two ATP-binding proteins (SugC), two transmembrane proteins (Suga and SugB) and a solute-binding protein (LpqY).

The protein localises to the cell inner membrane. Part of the ABC transporter complex LpqY-SugA-SugB-SugC, which is highly specific for uptake of trehalose. Involved in the recycling of extracellular trehalose released from trehalose-containing molecules synthesized by M.tuberculosis. Trehalose uptake is essential for virulence. Probably responsible for the translocation of the substrate across the membrane. The sequence is that of Trehalose transport system permease protein SugA (sugA) from Mycobacterium tuberculosis (strain CDC 1551 / Oshkosh).